Here is a 304-residue protein sequence, read N- to C-terminus: Acetyl-coenzyme A carboxylase carboxyl transferase subunit beta (304 aa).

The region spanning 25–294 (VWTKCDSCGQ…PSVVESKADT (270 aa)) is the CoA carboxyltransferase N-terminal domain. Zn(2+)-binding residues include cysteine 29, cysteine 32, cysteine 48, and cysteine 51. A C4-type zinc finger spans residues 29–51 (CDSCGQVLYRAELERNLEVCPKC).

Belongs to the AccD/PCCB family. Acetyl-CoA carboxylase is a heterohexamer composed of biotin carboxyl carrier protein (AccB), biotin carboxylase (AccC) and two subunits each of ACCase subunit alpha (AccA) and ACCase subunit beta (AccD). The cofactor is Zn(2+).

Its subcellular location is the cytoplasm. It carries out the reaction N(6)-carboxybiotinyl-L-lysyl-[protein] + acetyl-CoA = N(6)-biotinyl-L-lysyl-[protein] + malonyl-CoA. It participates in lipid metabolism; malonyl-CoA biosynthesis; malonyl-CoA from acetyl-CoA: step 1/1. Functionally, component of the acetyl coenzyme A carboxylase (ACC) complex. Biotin carboxylase (BC) catalyzes the carboxylation of biotin on its carrier protein (BCCP) and then the CO(2) group is transferred by the transcarboxylase to acetyl-CoA to form malonyl-CoA. The protein is Acetyl-coenzyme A carboxylase carboxyl transferase subunit beta of Yersinia pestis (strain Pestoides F).